The following is a 98-amino-acid chain: Integration host factor subunit alpha (98 aa).

The protein belongs to the bacterial histone-like protein family. In terms of assembly, heterodimer of an alpha and a beta chain.

Its function is as follows. This protein is one of the two subunits of integration host factor, a specific DNA-binding protein that functions in genetic recombination as well as in transcriptional and translational control. This chain is Integration host factor subunit alpha, found in Idiomarina loihiensis (strain ATCC BAA-735 / DSM 15497 / L2-TR).